We begin with the raw amino-acid sequence, 276 residues long: Urease accessory protein UreD (276 aa).

The protein belongs to the UreD family. UreD, UreF and UreG form a complex that acts as a GTP-hydrolysis-dependent molecular chaperone, activating the urease apoprotein by helping to assemble the nickel containing metallocenter of UreC. The UreE protein probably delivers the nickel.

It is found in the cytoplasm. In terms of biological role, required for maturation of urease via the functional incorporation of the urease nickel metallocenter. In Verminephrobacter eiseniae (strain EF01-2), this protein is Urease accessory protein UreD.